We begin with the raw amino-acid sequence, 1052 residues long: ATP-dependent DNA helicase MPH1 (1052 aa).

The 168-residue stretch at 89-256 (IVRKGLLQNI…EVVNNLNISK (168 aa)) folds into the Helicase ATP-binding domain. 102-109 (IPTGMGKT) provides a ligand contact to ATP. The DEAH box motif lies at 204–207 (DEAH). One can recognise a Helicase C-terminal domain in the interval 432–649 (ELTQFFYENP…HLVQYRKSDR (218 aa)). Disordered regions lie at residues 495–550 (HGPK…NQKQ), 798–832 (IGDTRNKAKASSSMKVKKEPTMAVDHSDDEEDLPL), 869–898 (SKRQRLQPEVQPEVQPEVQPEVQPEVQPEV), and 1002–1052 (HTVS…DSDF). Basic and acidic residues predominate over residues 503 to 532 (SDREKRLEEERRMDEEKKQAALQEKLERTS). Residues 534–549 (RTGSSEEAQLSGMNQK) are compositionally biased toward polar residues. Low complexity-rich tracts occupy residues 875 to 898 (QPEVQPEVQPEVQPEVQPEVQPEV) and 1005 to 1028 (SQSQGQSNSQSQAHSTSQKSQQAS). The segment covering 1029-1040 (QKDRSSQDKDLT) has biased composition (basic and acidic residues). Residues 1043–1052 (ELEDLLDSDF) are compositionally biased toward acidic residues.

It belongs to the DEAD box helicase family. DEAH subfamily. FANCM sub-subfamily. As to quaternary structure, interacts with the MHF histone-fold complex to form the FANCM-MHF complex.

Its subcellular location is the nucleus. It carries out the reaction ATP + H2O = ADP + phosphate + H(+). Its function is as follows. ATP-dependent DNA helicase involved in DNA damage repair by homologous recombination and in genome maintenance. Capable of unwinding D-loops. Plays a role in limiting crossover recombinants during mitotic DNA double-strand break (DSB) repair. Component of a FANCM-MHF complex which promotes gene conversion at blocked replication forks, probably by reversal of the stalled fork. The protein is ATP-dependent DNA helicase MPH1 of Candida glabrata (strain ATCC 2001 / BCRC 20586 / JCM 3761 / NBRC 0622 / NRRL Y-65 / CBS 138) (Yeast).